A 144-amino-acid chain; its full sequence is PE family protein PE9 (144 aa).

The PE domain maps to 1 to 87 (MSYMIATPAA…RTLTGGCGVF (87 aa)). The segment at 98-124 (AAEHRAAGAGRRQRRRRSGDGQWRLRQ) is disordered.

The protein belongs to the mycobacterial PE family. In terms of assembly, forms a complex with PE10. The complex interacts with human TLR4.

The protein resides in the secreted. It localises to the cell wall. It is found in the cell surface. In terms of biological role, together with PE10, induces macrophage apoptosis through human Toll-like receptor 4 (TLR4) signaling pathway. Interaction with TLR4 leads to increased levels of phospho-IRF-3, increase in the transcript levels of IFN-beta and pro-apoptotic genes, up-regulation of IL-10, down-regulation of IL-1b and enhanced levels of macrophage apoptosis. The protein is PE family protein PE9 of Mycobacterium tuberculosis (strain ATCC 25618 / H37Rv).